Here is a 670-residue protein sequence, read N- to C-terminus: Proline-rich receptor-like protein kinase PERK5 (670 aa).

The tract at residues 1–181 is disordered; that stretch reads MADSPVDSSP…SGDSDSSSGN (181 aa). Residues 1-186 are Extracellular-facing; it reads MADSPVDSSP…SSSGNHPQAN (186 aa). The segment covering 14-31 has biased composition (low complexity); it reads TSNGTPPSNGTSPSNESS. Asn22 and Asn28 each carry an N-linked (GlcNAc...) asparagine glycan. Pro residues-rich tracts occupy residues 32–62 and 84–109; these read PPTPPSSPPPSSISAPPPDISASFSPPPAPP and PQTPENPSPPAPEGSTPVTPPAPPQT. Asn130 carries N-linked (GlcNAc...) asparagine glycosylation. Over residues 132–141 the composition is skewed to low complexity; it reads TNGGNNNRDG. A glycan (N-linked (GlcNAc...) asparagine) is linked at Asn151. A compositionally biased stretch (low complexity) spans 167 to 181; the sequence is SPPQNSGDSDSSSGN. Residues 187 to 207 form a helical membrane-spanning segment; the sequence is IGLIIGVLVGAGLLLLLAVCI. The Cytoplasmic segment spans residues 208–670; it reads CICCNRKKKK…RGSMKRNPQL (463 aa). The residue at position 301 (Thr301) is a Phosphothreonine. The Protein kinase domain maps to 312-590; the sequence is FAQSNLLGQG…VRALEGDMSM (279 aa). Residues 318–326 and Lys340 each bind ATP; that span reads LGQGGFGYV. Tyr385 carries the post-translational modification Phosphotyrosine. Asp436 acts as the Proton acceptor in catalysis. Ser469 bears the Phosphoserine mark. Thr470 and Thr475 each carry phosphothreonine. Phosphotyrosine is present on Tyr483. Disordered regions lie at residues 589–613 and 635–670; these read SMDDLSEGTRPGQSTYLSPGSVSSE and EYQSSEYGGTSEYGLNPSASSSEEMNRGSMKRNPQL. Residues 599–613 show a composition bias toward polar residues; it reads PGQSTYLSPGSVSSE.

Belongs to the protein kinase superfamily. Ser/Thr protein kinase family. Mostly expressed in flower buds.

The protein resides in the cell membrane. The enzyme catalyses L-seryl-[protein] + ATP = O-phospho-L-seryl-[protein] + ADP + H(+). It carries out the reaction L-threonyl-[protein] + ATP = O-phospho-L-threonyl-[protein] + ADP + H(+). The polypeptide is Proline-rich receptor-like protein kinase PERK5 (PERK5) (Arabidopsis thaliana (Mouse-ear cress)).